Reading from the N-terminus, the 148-residue chain is Endoribonuclease YbeY (148 aa).

H112, H116, and H122 together coordinate Zn(2+).

The protein belongs to the endoribonuclease YbeY family. Requires Zn(2+) as cofactor.

It localises to the cytoplasm. In terms of biological role, single strand-specific metallo-endoribonuclease involved in late-stage 70S ribosome quality control and in maturation of the 3' terminus of the 16S rRNA. The protein is Endoribonuclease YbeY of Albidiferax ferrireducens (strain ATCC BAA-621 / DSM 15236 / T118) (Rhodoferax ferrireducens).